A 404-amino-acid chain; its full sequence is Interferon-activable protein 205-A (404 aa).

A Pyrin domain is found at 1–88; it reads MENEYKRLVL…AEILKKERSE (88 aa). Residues 85-198 are disordered; that stretch reads ERSEVTEETS…KSQPQNQNIP (114 aa). 2 stretches are compositionally biased toward low complexity: residues 102 to 112 and 122 to 132; these read ASPATPTSTTS and TSTTQEETSTA. Over residues 137-147 the composition is skewed to basic and acidic residues; it reads GMSEEKTDVKK. A compositionally biased stretch (low complexity) spans 168 to 185; that stretch reads QSPISQVSSSASSNIPSA. A compositionally biased stretch (polar residues) spans 186 to 197; the sequence is KNQKSQPQNQNI. An HIN-200 domain is found at 192-392; it reads PQNQNIPRGA…CGDHSFVKVT (201 aa).

Belongs to the HIN-200 family.

The protein localises to the nucleus. In terms of biological role, may act as a transcriptional regulator in the myeloid lineage. Inhibits cell growth via p53/TP53 and RB1-dependent and independent pathways. The chain is Interferon-activable protein 205-A (Ifi205a) from Mus musculus (Mouse).